We begin with the raw amino-acid sequence, 89 residues long: Small ribosomal subunit protein uS15 (89 aa).

This sequence belongs to the universal ribosomal protein uS15 family. Part of the 30S ribosomal subunit. Forms a bridge to the 50S subunit in the 70S ribosome, contacting the 23S rRNA.

Its function is as follows. One of the primary rRNA binding proteins, it binds directly to 16S rRNA where it helps nucleate assembly of the platform of the 30S subunit by binding and bridging several RNA helices of the 16S rRNA. Functionally, forms an intersubunit bridge (bridge B4) with the 23S rRNA of the 50S subunit in the ribosome. This chain is Small ribosomal subunit protein uS15, found in Bacillus pumilus (strain SAFR-032).